We begin with the raw amino-acid sequence, 322 residues long: MEADLSGFNIDAPRWDQRTFLGRVKHFLNITDPRTVFVSERELDWAKVMVEKSRMGVVPPGTQVEQLLYAKKLYDSAFHPDTGEKMNVIGRMSFQLPGGMIITGFMLQFYRTMPAVIFWQWVNQSFNALVNYTNRNAASPTSVRQMALSYFTATTTAVATAVGMNMLTKKAPPLVGRWVPFAAVAAANCVNIPMMRQQELIKGICVKDRNENEIGHSRRAAAIGITQVVISRITMSAPGMILLPVIMERLEKLHFMQKVKVLHAPLQVMLSGCFLIFMVPVACGLFPQKCELPVSYLEPKLQDTIKAKYGELEPYVYFNKGL.

N-acetylmethionine is present on Met-1. The next 5 membrane-spanning stretches (helical) occupy residues 100–122 (MIIT…WQWV), 142–164 (SVRQ…AVGM), 174–192 (LVGR…CVNI), 228–250 (VVIS…MERL), and 265–287 (PLQV…GLFP).

This sequence belongs to the sideroflexin family. In terms of tissue distribution, widely expressed, highest levels in kidney, liver, and pancreas.

It is found in the mitochondrion inner membrane. The protein localises to the mitochondrion outer membrane. It catalyses the reaction L-serine(in) = L-serine(out). Mitochondrial amino-acid transporter that mediates transport of serine into mitochondria. Involved in mitochondrial iron homeostasis by regulating heme biosynthesis. The protein is Sideroflexin-2 of Homo sapiens (Human).